A 577-amino-acid chain; its full sequence is MQWLMRFRTLWGIHKSFHNIHPAPSQLRCRSLSEFGAPRWNDYEVPEEFNFASYVLDYWAQKEKEGKRGPNPAFWWVNGQGDEVKWSFREMGDLTRRVANVFTQTCGLQQGDHLALMLPRVPEWWLVAVGCMRTGIIFIPATILLKAKDILYRLQLSKAKGIVTIDALASEVDSIASQCPSLKTKLLVSDHSREGWLDFRSLVKSASPEHTCVKSKTLDPMVIFFTSGTTGFPKMAKHSHGLALQPSFPGSRKLRSLKTSDVSWCLSDSGWIVATIWTLVEPWTAGCTVFIHHLPQFDTKVIIQTLLKYPINHFWGVSSIYRMILQQDFTSIRFPALEHCYTGGEVVLPKDQEEWKRRTGLLLYENYGQSETGLICATYWGMKIKPGFMGKATPPYDVQVIDDKGSILPPNTEGNIGIRIKPVRPVSLFMCYEGDPEKTAKVECGDFYNTGDRGKMDEEGYICFLGRSDDIINASGYRIGPAEVESALVEHPAVAESAVVGSPDPIRGEVVKAFIVLTPQFLSHDKDQLTKELQQHVKSVTAPYKYPRKVEFVSELPKTITGKIERKELRKKETGQM.

A mitochondrion-targeting transit peptide spans Met-1–Ser-31. The residue at position 85 (Lys-85) is an N6-succinyllysine. Lys-146 carries the post-translational modification N6-acetyllysine; alternate. The residue at position 146 (Lys-146) is an N6-succinyllysine; alternate. The residue at position 183 (Lys-183) is an N6-succinyllysine. Residue Lys-204 is modified to N6-acetyllysine; alternate. At Lys-204 the chain carries N6-succinyllysine; alternate. Position 214 is an N6-acetyllysine (Lys-214). An ATP-binding site is contributed by Thr-226–Lys-234. Lys-237 carries the post-translational modification N6-succinyllysine. An N6-acetyllysine; alternate mark is found at Lys-356 and Lys-391. N6-succinyllysine; alternate occurs at positions 356 and 391. The ATP site is built by Asp-452 and Arg-467. Lys-531 carries the post-translational modification N6-acetyllysine. Residue Lys-538 is modified to N6-acetyllysine; alternate. Lys-538 carries the N6-succinyllysine; alternate modification. Lys-549 is modified (N6-acetyllysine). Lys-563 provides a ligand contact to ATP.

It belongs to the ATP-dependent AMP-binding enzyme family. As to quaternary structure, monomer. Mg(2+) is required as a cofactor. Mn(2+) serves as cofactor.

The protein localises to the mitochondrion matrix. It localises to the mitochondrion. It catalyses the reaction a medium-chain fatty acid + ATP + CoA = a medium-chain fatty acyl-CoA + AMP + diphosphate. It carries out the reaction benzoate + ATP + CoA = benzoyl-CoA + AMP + diphosphate. The enzyme catalyses (R)-lipoate + GTP + H(+) = (R)-lipoyl-GMP + diphosphate. The catalysed reaction is octanoate + ATP + CoA = octanoyl-CoA + AMP + diphosphate. It catalyses the reaction decanoate + ATP + CoA = decanoyl-CoA + AMP + diphosphate. It carries out the reaction dodecanoate + ATP + CoA = dodecanoyl-CoA + AMP + diphosphate. The enzyme catalyses tetradecanoate + ATP + CoA = tetradecanoyl-CoA + AMP + diphosphate. The catalysed reaction is hexanoate + ATP + CoA = hexanoyl-CoA + AMP + diphosphate. It catalyses the reaction butanoate + ATP + CoA = butanoyl-CoA + AMP + diphosphate. It carries out the reaction hexadecanoate + ATP + CoA = hexadecanoyl-CoA + AMP + diphosphate. Its activity is regulated as follows. Activated by monovalent cations, such as potassium, rubidium or ammonium. Functionally, catalyzes the activation of fatty acids by CoA to produce an acyl-CoA, the first step in fatty acid metabolism. Capable of activating medium-chain fatty acids (e.g. butyric (C4) to decanoic (C10) acids), and certain carboxylate-containing xenobiotics, e.g. benzoate. Also catalyzes the activation of lipoate to lipoyl-nucleoside monophosphate. Activates lipoate with GTP at a 1000-fold higher rate than with ATP and activates both (R)- and (S)-lipoate to the respective lipoyl-GMP, with a preference for (R)-lipoate. The polypeptide is Acyl-coenzyme A synthetase ACSM1, mitochondrial (ACSM1) (Homo sapiens (Human)).